The following is a 619-amino-acid chain: MSEVLQRITDPKEIKDLDEKELEILAEDLREFLIESVSNTGGHFASNLGVIDLTVALFKNFDFSEDRIIWDVGHQSYAYKILTGRKDKFNTLRQYGGLCGFPKRTESEYDFFATGHSSTSLSSAAGMARAQRLLGKDNKVIAVIGDGALTGGMALEALNDIGYRKDNLIIILNDNQMSICKNVGGLATYLNKLRMGVGYNKLKSDIGSTLDTTSFGKRVKNSLSKLKDGIKKIVVPSMYFEDIGLKYFGIVDGHNIRELNEVLSIAKNIKGPVIIHTVTKKGKGYELAEKNPNKYHGVSPFDLGEGVISKFASRNYSSTFGEEMIKLAKNDDKVVAITAAMPDGTGLKEFREEFPDRFFDVGIAEQHAVTLAAGMAAEGLKPFFAVYSTFLQRAYDQVLHDVCIQKLPVTLCLDRAGLVGEDGETHQGIFDISFLSPMPNMTIVAPKCIDEMEVILKWASNFNAPLAIRYPRGGDIDVNLKPLSKIEYGKWEKVQEGDKIAIVATGKMVQHAMIAAQKIKEEKNIDILIINATFIKPIDKELLNSLSKDGFKIVTIEDNIKKGGFGEGVLEYLNEIGHKEKIVTLAFNDKFIEHGKPDILYKINGLDAEGIKNTLIELL.

Thiamine diphosphate contacts are provided by residues H74 and G115–S117. Position 146 (D146) interacts with Mg(2+). Residues G147–A148, N175, Y285, and E365 contribute to the thiamine diphosphate site. Residue N175 coordinates Mg(2+).

The protein belongs to the transketolase family. DXPS subfamily. In terms of assembly, homodimer. The cofactor is Mg(2+). Thiamine diphosphate serves as cofactor.

The catalysed reaction is D-glyceraldehyde 3-phosphate + pyruvate + H(+) = 1-deoxy-D-xylulose 5-phosphate + CO2. The protein operates within metabolic intermediate biosynthesis; 1-deoxy-D-xylulose 5-phosphate biosynthesis; 1-deoxy-D-xylulose 5-phosphate from D-glyceraldehyde 3-phosphate and pyruvate: step 1/1. Catalyzes the acyloin condensation reaction between C atoms 2 and 3 of pyruvate and glyceraldehyde 3-phosphate to yield 1-deoxy-D-xylulose-5-phosphate (DXP). The protein is 1-deoxy-D-xylulose-5-phosphate synthase of Clostridium perfringens (strain ATCC 13124 / DSM 756 / JCM 1290 / NCIMB 6125 / NCTC 8237 / Type A).